Consider the following 301-residue polypeptide: MTLERDAAANTAKVLSEALPYIRRYVGKTLVIKYGGNAMESEELKTGFARDIVLMKAVGINPVVVHGGGPQIGDLLKRLSIESHFVDGMRVTDAATMDVVEMVLGGQVNKSIVNLINRHGGSAIGLTGKDAGLIRAKKLTVTRQTPEMTQPEIIDIGHVGEVVGINTELLNLLVKGNFIPVIAPIGVGENGESYNINADLVAGKVAEALKAEKLMLLTNIAGLMDKSGTVLTGLSTQQVDDLIADGTIYGGMLPKIRCALEAVQGGVGSSLIIDGRVPNAILLEIFTDTGVGTLISNRKRP.

Substrate is bound by residues 68 to 69 (GG), R90, and N195.

It belongs to the acetylglutamate kinase family. ArgB subfamily.

The protein resides in the cytoplasm. It carries out the reaction N-acetyl-L-glutamate + ATP = N-acetyl-L-glutamyl 5-phosphate + ADP. It functions in the pathway amino-acid biosynthesis; L-arginine biosynthesis; N(2)-acetyl-L-ornithine from L-glutamate: step 2/4. Functionally, catalyzes the ATP-dependent phosphorylation of N-acetyl-L-glutamate. The polypeptide is Acetylglutamate kinase (Pseudomonas fluorescens (strain Pf0-1)).